Consider the following 114-residue polypeptide: Hydrogenase maturation factor HypA (114 aa).

Histidine 2 contacts Ni(2+). Zn(2+)-binding residues include cysteine 73, cysteine 76, cysteine 90, and cysteine 93.

This sequence belongs to the HypA/HybF family.

Functionally, involved in the maturation of [NiFe] hydrogenases. Required for nickel insertion into the metal center of the hydrogenase. The chain is Hydrogenase maturation factor HypA from Klebsiella pneumoniae (strain 342).